Here is a 151-residue protein sequence, read N- to C-terminus: UPF0756 membrane protein HSM_1471 (151 aa).

Transmembrane regions (helical) follow at residues 1–21 (MSLQ…LGVL), 52–72 (YGVN…IVSG), 81–101 (ALIH…AWFG), and 123–143 (ILGV…AGIL).

This sequence belongs to the UPF0756 family.

It is found in the cell membrane. In Histophilus somni (strain 2336) (Haemophilus somnus), this protein is UPF0756 membrane protein HSM_1471.